The primary structure comprises 261 residues: Sugar fermentation stimulation protein homolog (261 aa).

Residues 1–23 (MTDSAKPQNPDPGHESRRVAPLA) form a disordered region.

This sequence belongs to the SfsA family.

This Syntrophobacter fumaroxidans (strain DSM 10017 / MPOB) protein is Sugar fermentation stimulation protein homolog.